The following is a 391-amino-acid chain: MVQHHQAAANDDHQAIPLLTPYKQAGRPGSKLDLSHRVLLAPMTRCRSYGNVPQPHAALYYTQRATRGGLLITEATGVSATAQGYPETPGVRTREHVEAWKPIVDAVHRKGALFICQLWHVGRVSNNGFQPDGLAPISSTDKAITPDGYGMVYSKPRRLRTDEIPQIVDDFRLAARNAVEAGFDGVEIHGANGYLLEQFMKDSSNDRTDEYGGSLENRCRFAVEVIDAVVGEIGAHSVGIRLSPFLDYMDCVDSDPEALGSYMVEQLNKHEDFLYCHMVEPRMAIVDGRRQIQHGLLPFRKQFNGTFIAAGGYDREEGNKAVADGYADLVAYGRLFLANPDLPKRFELDAPMNNYDRNTFYTQDPVVGYTDYPFLDEHHHDDDDDSNAPSA.

FMN contacts are provided by residues 42–44 (PMT), A75, and Q117. 189–192 (HGAN) serves as a coordination point for substrate. Y194 functions as the Proton donor in the catalytic mechanism. An FMN-binding site is contributed by R241. Residue R282 coordinates substrate. Residues G312 and 333-334 (GR) contribute to the FMN site. The interval 372–391 (YPFLDEHHHDDDDDSNAPSA) is disordered. The span at 382-391 (DDDDSNAPSA) shows a compositional bias: acidic residues.

It belongs to the NADH:flavin oxidoreductase/NADH oxidase family. It depends on FMN as a cofactor.

Its function is as follows. Putative oxophytodienoate reductase that may be involved in the biosynthesis or metabolism of oxylipin signaling molecules. This is Putative 12-oxophytodienoate reductase 6 (OPR6) from Oryza sativa subsp. japonica (Rice).